The sequence spans 272 residues: uncharacterized protein (272 aa).

The 27-residue stretch at 1–27 (MDTLAFINRALVEEGYSLKDIKLVLIT) folds into the HTH merR-type domain.

This is an uncharacterized protein from Aquifex aeolicus (strain VF5).